Here is a 65-residue protein sequence, read N- to C-terminus: Small ribosomal subunit protein eS27 (65 aa).

Cysteine 21, cysteine 24, cysteine 40, and cysteine 43 together coordinate Zn(2+). The C4-type zinc finger occupies 21–43; sequence CRDCGNVQVVFARPSSTVTCNIC.

This sequence belongs to the eukaryotic ribosomal protein eS27 family. Part of the 30S ribosomal subunit. It depends on Zn(2+) as a cofactor.

This chain is Small ribosomal subunit protein eS27, found in Thermoplasma acidophilum (strain ATCC 25905 / DSM 1728 / JCM 9062 / NBRC 15155 / AMRC-C165).